The following is a 383-amino-acid chain: Paralemmin-1 (383 aa).

Residue methionine 1 is modified to N-acetylmethionine. Residues 7–101 adopt a coiled-coil conformation; that stretch reads DTVSQQERLQ…EKEIDVLEFG (95 aa). 3 disordered regions span residues 51-164, 242-293, and 333-374; these read RERW…STMM, TLSE…QPGQ, and SVTP…DMKK. A compositionally biased stretch (basic and acidic residues) spans 69–96; the sequence is DMRKQMQEDEQKARSLEESITRLEKEID. A phosphoserine mark is found at serine 116, serine 122, and serine 124. Positions 133–143 are enriched in polar residues; sequence ETMVNAQQTPL. Phosphothreonine occurs at positions 141, 145, and 153. Serine 157 and serine 161 each carry phosphoserine. Threonine 242 is subject to Phosphothreonine. The residue at position 244 (serine 244) is a Phosphoserine. The span at 257–273 shows a compositional bias: basic and acidic residues; sequence GLAEDVTRTTPSRREIT. Serine 345 is subject to Phosphoserine. Positions 357 to 367 are enriched in polar residues; that stretch reads QTGPTTTPSDT. Phosphothreonine occurs at positions 361, 362, and 363. The residue at position 365 (serine 365) is a Phosphoserine. Threonine 367 carries the post-translational modification Phosphothreonine. S-palmitoyl cysteine attachment occurs at residues cysteine 377 and cysteine 379. The residue at position 380 (cysteine 380) is a Cysteine methyl ester. Cysteine 380 carries S-farnesyl cysteine lipidation. The propeptide at 381 to 383 is removed in mature form; sequence SVM.

It belongs to the paralemmin family. In terms of assembly, interacts with dopamine receptor DRD3. In terms of tissue distribution, expressed in neurons cells of neuropil-rich areas of the brain, in the Purkinje cells of the cerebellum, in cells of the cerebral cortex, hippocampus, brainstem nuclei and glial processes and sheaths. Expressed in the medulla of the adrenal chromaffin cells and renal duct cells (at protein level).

The protein resides in the cell membrane. The protein localises to the cell projection. It is found in the filopodium membrane. Its subcellular location is the axon. It localises to the dendrite. The protein resides in the dendritic spine. The protein localises to the basolateral cell membrane. It is found in the apicolateral cell membrane. Functionally, involved in plasma membrane dynamics and cell process formation. Necessary for axonal and dendritic filopodia induction, for dendritic spine maturation and synapse formation in a palmitoylation-dependent manner. The sequence is that of Paralemmin-1 (Palm) from Rattus norvegicus (Rat).